Reading from the N-terminus, the 551-residue chain is Probable NADH-ubiquinone oxidoreductase C947.15c, mitochondrial (551 aa).

A mitochondrion-targeting transit peptide spans 1–35; it reads MSVSKARLQSVVRLSRTVPYSKTMVRSFHVSCAVK. Residue 92–122 coordinates FAD; it reads NIVVLGSGWGAVAAIKNLDPSLYNITLVSPR. 255–291 is an NAD(+) binding site; it reads LHITVVGGGPTGMEFAAEMQDFIDNDVKDMFPELQKD.

The protein belongs to the NADH dehydrogenase family.

Its subcellular location is the mitochondrion. The enzyme catalyses a quinone + NADH + H(+) = a quinol + NAD(+). The catalysed reaction is a ubiquinone + NADH + H(+) = a ubiquinol + NAD(+). Catalyzes the oxidation of NADH. In Schizosaccharomyces pombe (strain 972 / ATCC 24843) (Fission yeast), this protein is Probable NADH-ubiquinone oxidoreductase C947.15c, mitochondrial.